A 247-amino-acid polypeptide reads, in one-letter code: MKVVNLTDIHLTRNRDKKLFDVNTYDNFDFVCEEIHRIQNLTEIELIIVSGDIANDGDVEAYRYFLNKMESLKTPYISILGNHDLNKNFEITLAEEKPKYIISSREYNNDNWYITAVDTVVEGEDYGFITQDNLAELERKIITNSNFNIAIFMHHHAMPVGTPIVDSCMLNNAKAILELCEKHRVKFIGSGHAHTPRVWHHNNMTACVSPAVSFQWLSGTNTVKISKGFGFNVIDFSPDLSITSCIY.

Asp8, His10, Asp52, Asn82, His154, His192, and His194 together coordinate Fe cation. Residues His10, Asp52, and Asn82–His83 contribute to the AMP site. Residue His194 coordinates AMP.

It belongs to the cyclic nucleotide phosphodiesterase class-III family. The cofactor is Fe(2+).

The polypeptide is Probable cyclic nucleotide phosphodiesterase XBJ1_0953 (Xenorhabdus bovienii (strain SS-2004) (Xenorhabdus nematophila subsp. bovienii)).